Consider the following 525-residue polypeptide: Probable CoA ligase CCL9 (525 aa).

ATP-binding positions include 171–179 (TSGTTSRPK), 311–316 (EAYAMT), Asp395, 407–410 (LVGR), and Lys501. The interval 242-311 (SASTFWSDMI…EESFGAPVLE (70 aa)) is SBD1. An SBD2 region spans residues 312 to 375 (AYAMTEAAHL…IRGPNVTKGY (64 aa)).

Belongs to the ATP-dependent AMP-binding enzyme family.

It localises to the cytoplasm. It is found in the cytosol. This is Probable CoA ligase CCL9 from Humulus lupulus (European hop).